The sequence spans 591 residues: L-fucose isomerase (591 aa).

Active-site proton acceptor residues include E337 and D361. The Mn(2+) site is built by E337, D361, and H528.

It belongs to the L-fucose isomerase family. In terms of assembly, homohexamer. Mn(2+) serves as cofactor.

It is found in the cytoplasm. The catalysed reaction is L-fucose = L-fuculose. It participates in carbohydrate degradation; L-fucose degradation; L-lactaldehyde and glycerone phosphate from L-fucose: step 1/3. In terms of biological role, converts the aldose L-fucose into the corresponding ketose L-fuculose. The chain is L-fucose isomerase from Klebsiella pneumoniae subsp. pneumoniae (strain ATCC 700721 / MGH 78578).